Consider the following 120-residue polypeptide: Large ribosomal subunit protein uL22 (120 aa).

Positions 1–20 are disordered; it reads MFVNRRYTARGKNLPSSPKK.

The protein belongs to the universal ribosomal protein uL22 family. In terms of assembly, part of the 50S ribosomal subunit.

This protein binds specifically to 23S rRNA; its binding is stimulated by other ribosomal proteins, e.g. L4, L17, and L20. It is important during the early stages of 50S assembly. It makes multiple contacts with different domains of the 23S rRNA in the assembled 50S subunit and ribosome. In terms of biological role, the globular domain of the protein is located near the polypeptide exit tunnel on the outside of the subunit, while an extended beta-hairpin is found that lines the wall of the exit tunnel in the center of the 70S ribosome. The polypeptide is Large ribosomal subunit protein uL22 (Borrelia hermsii (strain HS1 / DAH)).